A 326-amino-acid chain; its full sequence is Acetyl-coenzyme A carboxylase carboxyl transferase subunit alpha (326 aa).

A CoA carboxyltransferase C-terminal domain is found at 44-298 (KLETRAMQLR…KQALLDNLDE (255 aa)).

Belongs to the AccA family. As to quaternary structure, acetyl-CoA carboxylase is a heterohexamer composed of biotin carboxyl carrier protein (AccB), biotin carboxylase (AccC) and two subunits each of ACCase subunit alpha (AccA) and ACCase subunit beta (AccD).

It is found in the cytoplasm. The enzyme catalyses N(6)-carboxybiotinyl-L-lysyl-[protein] + acetyl-CoA = N(6)-biotinyl-L-lysyl-[protein] + malonyl-CoA. It functions in the pathway lipid metabolism; malonyl-CoA biosynthesis; malonyl-CoA from acetyl-CoA: step 1/1. Its function is as follows. Component of the acetyl coenzyme A carboxylase (ACC) complex. First, biotin carboxylase catalyzes the carboxylation of biotin on its carrier protein (BCCP) and then the CO(2) group is transferred by the carboxyltransferase to acetyl-CoA to form malonyl-CoA. This chain is Acetyl-coenzyme A carboxylase carboxyl transferase subunit alpha, found in Nostoc sp. (strain PCC 7120 / SAG 25.82 / UTEX 2576).